We begin with the raw amino-acid sequence, 544 residues long: Cytochrome P450 monooxygenase cle2 (544 aa).

Residues 19–39 traverse the membrane as a helical segment; sequence LGLLIGLSLILSITWTAYTIL. A disordered region spans residues 273–305; it reads RTQQVEQSIEKNTKNEKKEDEDEDQNEDEETPG. The span at 280 to 290 shows a compositional bias: basic and acidic residues; it reads SIEKNTKNEKK. The segment covering 291–304 has biased composition (acidic residues); it reads EDEDEDQNEDEETP. A heme-binding site is contributed by C478.

It belongs to the cytochrome P450 family. The cofactor is heme.

The protein resides in the membrane. It participates in secondary metabolite biosynthesis; terpenoid biosynthesis. Cytochrome P450 monooxygenase; part of the cluster A that mediates the biosynthesis of chevalone E and its oxidized derivatives that possess a unique five-membered lactone ring and can synergistically enhance the cytotoxicity of doxorubicin (DOX) in breast cancer cells. Within the pathway, cle2 is involved in hydroxylation of the chavalone E scaffold at position C-20 and contributes with cle4 to the production of seven oxidation derivatives. The molecular scaffold is commonly biosynthesized by a series of enzymes including the non-reducing polyketide synthase (NR-PKS) cle1 that produces the alpha-pyrone triacetic acid lactone (TAL); The membrane-bound prenyltransferase cle5 that accepts TAL as its substrate to perform a C-3 geranylgeranylation reaction, in which the pathway-dedicated GGPS cle6 is required to provide GGPP, the other substrate of cle5; the FAD-dependent monooxygenase Cle3 that forms an (S)-epoxide ring at the terminal olefin of the geranylgeranyl group; and the terpene cyclase Cle7 that catalyzes the cyclization of the prenyl group that yields the pentacyclic pathway intermediate chevalone E. Chevalone E can derivatize into seven new oxidized analogs by the cytochrome P450 monooxygenases cle2 (acting at C-20) and cle4 (acting at C-11 and C-12). This is Cytochrome P450 monooxygenase cle2 from Aspergillus versicolor.